Consider the following 200-residue polypeptide: FMN-dependent NADH:quinone oxidoreductase 2 (200 aa).

Residue 135-138 (SRGG) participates in FMN binding.

Belongs to the azoreductase type 1 family. Homodimer. FMN serves as cofactor.

It catalyses the reaction 2 a quinone + NADH + H(+) = 2 a 1,4-benzosemiquinone + NAD(+). The catalysed reaction is N,N-dimethyl-1,4-phenylenediamine + anthranilate + 2 NAD(+) = 2-(4-dimethylaminophenyl)diazenylbenzoate + 2 NADH + 2 H(+). Its function is as follows. Quinone reductase that provides resistance to thiol-specific stress caused by electrophilic quinones. In terms of biological role, also exhibits azoreductase activity. Catalyzes the reductive cleavage of the azo bond in aromatic azo compounds to the corresponding amines. This Clostridium acetobutylicum (strain ATCC 824 / DSM 792 / JCM 1419 / IAM 19013 / LMG 5710 / NBRC 13948 / NRRL B-527 / VKM B-1787 / 2291 / W) protein is FMN-dependent NADH:quinone oxidoreductase 2.